The following is a 37-amino-acid chain: Alpha-conotoxin TxID (37 aa).

Positions 1 to 21 (FDGRNAAGNDKMSALMALTTR) are excised as a propeptide. 2 cysteine pairs are disulfide-bonded: Cys-23-Cys-29 and Cys-24-Cys-36. Cys-36 carries the cysteine amide modification.

This sequence belongs to the conotoxin A superfamily. Unmodified Met-32 is essential for toxin binding to rat alpha-3-beta-4/CHRNA3-CHRNB4 nAChR. An oxidation of this methionine provokes a 13.3-fold decrease in inhibitory potency (IC(50)=245 nM instead of 18 nM). Owing to its potent activity, derivatives of this toxin have a potential in the development of a novel drug. Unfortunately, the oxidation of the methionine is readily to happen during toxin synthesis and oxidation steps as well as under oxidative environment in vivo, which should still be considered to find a solution to this major drawback. In terms of tissue distribution, expressed by the venom duct.

The protein resides in the secreted. Its function is as follows. Alpha-conotoxins act on postsynaptic membranes, they bind to the nicotinic acetylcholine receptors (nAChR) and thus inhibit them. This toxin inhibits alpha-3-beta-4/CHRNA3-CHRNB4 (IC(50)=3.6-18.38 nM), alpha-6/alpha-3-beta-4 (CHRNA6/CHRNA3-CHRNB4) (IC(50)=33.9-94.1 nM), and alpha-2-beta-4/CHRNA2-CHRNB4 (IC(50)=4550 nM) nAChRs. The toxin competes with agonists in the orthosteric binding site of alpha-3-beta-4/CHRNA3-CHRNB4 and alpha-6-beta-4/CHRNA6-CHRNB4. The polypeptide is Alpha-conotoxin TxID (Conus textile (Cloth-of-gold cone)).